The primary structure comprises 338 residues: Glycerol-3-phosphate dehydrogenase [NAD(P)+] (338 aa).

S15, Y16, H36, and K110 together coordinate NADPH. Residues K110, G139, and T141 each coordinate sn-glycerol 3-phosphate. An NADPH-binding site is contributed by A143. Positions 195, 248, 258, 259, and 260 each coordinate sn-glycerol 3-phosphate. The active-site Proton acceptor is the K195. R259 is a binding site for NADPH. Residues V283 and E285 each contribute to the NADPH site.

This sequence belongs to the NAD-dependent glycerol-3-phosphate dehydrogenase family.

It is found in the cytoplasm. The enzyme catalyses sn-glycerol 3-phosphate + NAD(+) = dihydroxyacetone phosphate + NADH + H(+). It catalyses the reaction sn-glycerol 3-phosphate + NADP(+) = dihydroxyacetone phosphate + NADPH + H(+). Its pathway is membrane lipid metabolism; glycerophospholipid metabolism. Its function is as follows. Catalyzes the reduction of the glycolytic intermediate dihydroxyacetone phosphate (DHAP) to sn-glycerol 3-phosphate (G3P), the key precursor for phospholipid synthesis. The polypeptide is Glycerol-3-phosphate dehydrogenase [NAD(P)+] (Edwardsiella ictaluri (strain 93-146)).